The chain runs to 501 residues: Cytochrome P450 2S1 (501 aa).

C441 is a heme binding site.

It belongs to the cytochrome P450 family. The cofactor is heme.

The protein localises to the endoplasmic reticulum membrane. It is found in the microsome membrane. The enzyme catalyses all-trans-retinoate + reduced [NADPH--hemoprotein reductase] + O2 = all-trans-5,6-epoxyretinoate + oxidized [NADPH--hemoprotein reductase] + H2O + H(+). The catalysed reaction is all-trans-retinoate + reduced [NADPH--hemoprotein reductase] + O2 = all-trans-4-hydroxyretinoate + oxidized [NADPH--hemoprotein reductase] + H2O + H(+). It carries out the reaction (5S)-hydroperoxy-(6E,8Z,11Z,14Z)-eicosatetraenoate = 5-oxo-(6E,8Z,11Z,14Z)-eicosatetraenoate + H2O. It catalyses the reaction (12S)-hydroperoxy-(5Z,8Z,10E,14Z)-eicosatetraenoate = 12-oxo-(5Z,8Z,10E,14Z)-eicosatetraenoate + H2O. The enzyme catalyses (15S)-hydroperoxy-(5Z,8Z,11Z,13E)-eicosatetraenoate = 15-oxo-(5Z,8Z,11Z,13E)-eicosatetraenoate + H2O. The catalysed reaction is prostaglandin H2 = thromboxane A2. It carries out the reaction prostaglandin H2 = (12S)-hydroxy-(5Z,8E,10E)-heptadecatrienoate + malonaldehyde. It catalyses the reaction (13S)-hydroperoxy-(9Z,11E)-octadecadienoate = 13-oxo-(9Z,11E)-octadecadienoate + H2O. Its pathway is lipid metabolism; fatty acid metabolism. Its function is as follows. A cytochrome P450 monooxygenase involved in the metabolism of retinoids and eicosanoids. In epidermis, may contribute to the oxidative metabolism of all-trans-retinoic acid. For this activity, uses molecular oxygen inserting one oxygen atom into a substrate, and reducing the second into a water molecule, with two electrons provided by NADPH via cytochrome P450 reductase (NADPH--hemoprotein reductase). Additionally, displays peroxidase and isomerase activities toward various oxygenated eicosanoids such as prostaglandin H2 (PGH2) and hydroperoxyeicosatetraenoates (HPETEs). Independently of cytochrome P450 reductase, NADPH, and O2, catalyzes the breakdown of PGH2 to hydroxyheptadecatrienoic acid (HHT) and malondialdehyde (MDA), which is known to act as a mediator of DNA damage. This Mus musculus (Mouse) protein is Cytochrome P450 2S1 (Cyp2s1).